Here is a 94-residue protein sequence, read N- to C-terminus: Large ribosomal subunit protein uL23 (94 aa).

Belongs to the universal ribosomal protein uL23 family. As to quaternary structure, part of the 50S ribosomal subunit. Contacts protein L29, and trigger factor when it is bound to the ribosome.

In terms of biological role, one of the early assembly proteins it binds 23S rRNA. One of the proteins that surrounds the polypeptide exit tunnel on the outside of the ribosome. Forms the main docking site for trigger factor binding to the ribosome. The protein is Large ribosomal subunit protein uL23 of Listeria monocytogenes serotype 4b (strain CLIP80459).